A 465-amino-acid chain; its full sequence is Hepatocyte nuclear factor 6 (465 aa).

Disordered stretches follow at residues 17 to 55 (SHEPVPAPADLLGGSPHARSSVAHRGSHLPPAHPRSMGM), 120 to 141 (DKFPHHHHHHHHHHHPHHHQRL), 264 to 290 (LLGTAREPNPSVTGAQVSNGSNSGQME), and 442 to 465 (DKWQDEGSSNSGNSSSSSSTCTKA). Residues 123 to 140 (PHHHHHHHHHHHPHHHQR) show a composition bias toward basic residues. The segment covering 273 to 288 (PSVTGAQVSNGSNSGQ) has biased composition (polar residues). A DNA-binding region (CUT) is located at residues 283–369 (GSNSGQMEEI…QRMSALRLAA (87 aa)). Residues 385–444 (PKKPRLVFTDVQRRTLHAIFKENKRPSKELQITISQQLGLELSTVSNFFMNARRRSLDKW) constitute a DNA-binding region (homeobox). Residues 448–465 (GSSNSGNSSSSSSTCTKA) show a composition bias toward low complexity.

It belongs to the CUT homeobox family. In terms of assembly, binds DNA as a monomer. Highly expressed in liver; lower expression in testis and skin.

The protein localises to the nucleus. Its function is as follows. Transcriptional activator. Binds the consensus sequence 5'-DHWATTGAYTWWD-3' on a variety of gene promoters such as those of HNF3B and TTR. Important for liver genes transcription. The polypeptide is Hepatocyte nuclear factor 6 (ONECUT1) (Homo sapiens (Human)).